We begin with the raw amino-acid sequence, 465 residues long: 23S rRNA (uracil(1939)-C(5))-methyltransferase RlmD (465 aa).

The interval 1–24 (MSEAVPLSTRRASSAGDAPGRAPV) is disordered. The TRAM domain maps to 16–80 (GDAPGRAPVL…PTYEQAQVVD (65 aa)). [4Fe-4S] cluster contacts are provided by Cys-93, Cys-99, Cys-102, and Cys-181. S-adenosyl-L-methionine contacts are provided by Gln-289, Phe-318, Asn-323, Glu-339, Asn-367, and Asp-388. Cys-421 acts as the Nucleophile in catalysis.

This sequence belongs to the class I-like SAM-binding methyltransferase superfamily. RNA M5U methyltransferase family. RlmD subfamily.

The enzyme catalyses uridine(1939) in 23S rRNA + S-adenosyl-L-methionine = 5-methyluridine(1939) in 23S rRNA + S-adenosyl-L-homocysteine + H(+). Functionally, catalyzes the formation of 5-methyl-uridine at position 1939 (m5U1939) in 23S rRNA. In Burkholderia mallei (strain ATCC 23344), this protein is 23S rRNA (uracil(1939)-C(5))-methyltransferase RlmD.